The following is a 589-amino-acid chain: Alpha-1,2-mannosyltransferase MNN22 (589 aa).

The Cytoplasmic portion of the chain corresponds to 1–16 (MGSIFKDGRRILVRPK). A helical membrane pass occupies residues 17-33 (SLIICLCLISIIFTQLI). At 34 to 589 (RYQYQLIADE…NTIAWLGKKT (556 aa)) the chain is on the extracellular side. A disordered region spans residues 50 to 77 (EDHSSSQSLKNTKLNSTRSSSPISPPKS). The span at 54 to 71 (SSQSLKNTKLNSTRSSSP) shows a compositional bias: polar residues. Residues asparagine 64, asparagine 332, and asparagine 530 are each glycosylated (N-linked (GlcNAc...) asparagine).

The protein belongs to the MNN1/MNT family.

It localises to the golgi apparatus membrane. Its pathway is protein modification; protein glycosylation. In terms of biological role, alpha-1,2-mannosyltransferase required for cell wall integrity. Responsible for addition of the first alpha-1,2-linked mannose to form the branches on the mannan backbone of oligosaccharides. Addition of alpha-1,2-mannose is required for stabilization of the alpha-1,6-mannose backbone and hence regulates mannan fibril length; and is important for both immune recognition and virulence. The polypeptide is Alpha-1,2-mannosyltransferase MNN22 (MNN22) (Candida albicans (strain SC5314 / ATCC MYA-2876) (Yeast)).